The chain runs to 504 residues: Beta-glucosidase 24 (504 aa).

A signal peptide spans 1-18; the sequence is MELLWLLLLLLMASSTSS. Glutamine 47 serves as a coordination point for a beta-D-glucoside. The N-linked (GlcNAc...) asparagine glycan is linked to asparagine 75. Residues histidine 151 and 196-197 contribute to the a beta-D-glucoside site; that span reads NE. Glutamate 197 functions as the Proton donor in the catalytic mechanism. An intrachain disulfide couples cysteine 216 to cysteine 224. Asparagine 329 carries N-linked (GlcNAc...) asparagine glycosylation. Tyrosine 340 contacts a beta-D-glucoside. Asparagine 371 carries N-linked (GlcNAc...) asparagine glycosylation. Glutamate 411 lines the a beta-D-glucoside pocket. The active-site Nucleophile is the glutamate 411. The N-linked (GlcNAc...) asparagine glycan is linked to asparagine 421. A beta-D-glucoside is bound by residues tryptophan 460, 467-468, and phenylalanine 476; that span reads EW.

It belongs to the glycosyl hydrolase 1 family.

It catalyses the reaction Hydrolysis of terminal, non-reducing beta-D-glucosyl residues with release of beta-D-glucose.. The chain is Beta-glucosidase 24 (BGLU24) from Oryza sativa subsp. japonica (Rice).